The sequence spans 174 residues: Adenine phosphoribosyltransferase (174 aa).

Belongs to the purine/pyrimidine phosphoribosyltransferase family. As to quaternary structure, homodimer.

It localises to the cytoplasm. The catalysed reaction is AMP + diphosphate = 5-phospho-alpha-D-ribose 1-diphosphate + adenine. It functions in the pathway purine metabolism; AMP biosynthesis via salvage pathway; AMP from adenine: step 1/1. Catalyzes a salvage reaction resulting in the formation of AMP, that is energically less costly than de novo synthesis. This Mycobacterium sp. (strain JLS) protein is Adenine phosphoribosyltransferase.